A 981-amino-acid polypeptide reads, in one-letter code: NAD(+) hydrolase tir-1 (981 aa).

Disordered regions lie at residues 1 to 31 (MLPNRKPPRPSPSFQSLNNNNQRFPLRRSLK), 74 to 128 (QNEQ…PTQP), and 173 to 225 (LSTP…PVDQ). 2 stretches are compositionally biased toward polar residues: residues 12 to 23 (PSFQSLNNNNQR) and 74 to 85 (QNEQDGETTSTD). The segment covering 87–97 (AFFELDDDDDL) has biased composition (acidic residues). Residues 98-114 (SSPSVPGSPVDPPSISV) show a composition bias toward low complexity. A compositionally biased stretch (pro residues) spans 115–128 (PLPPKSAPPCPTQP). Residues 182-200 (EEMHNGQVRKESEYRRFKS) show a composition bias toward basic and acidic residues. SAM domains lie at 614-678 (WTCA…LKVA) and 684-750 (VDES…AKHP). In terms of domain architecture, TIR spans 760 to 857 (KQIDVFISYR…EHQKNIIPIF (98 aa)). An NAD(+)-binding site is contributed by 769–770 (RR). The active site involves E842. 3 stretches are compositionally biased toward polar residues: residues 908 to 939 (TTPTTKEMPSISRKTTQQRWQTTNTVSRTGPS), 954 to 963 (FTPTGSQERA), and 972 to 981 (PSASTTSDRN). A disordered region spans residues 908-981 (TTPTTKEMPS…PSASTTSDRN (74 aa)).

Belongs to the SARM1 family. As to quaternary structure, homodimer. Interacts with rab-1, pal-1 and unc-43. Highly expressed in hypodermis. Localizes to postsynaptic regions of axons.

It localises to the cytoplasm. The catalysed reaction is NAD(+) + H2O = ADP-D-ribose + nicotinamide + H(+). Functionally, NAD(+) hydrolase, which plays a key role in non-apoptotic cell death by regulating NAD(+) metabolism. In response to stress, homooligomerizes and catalyzes cleavage of NAD(+) into ADP-D-ribose (ADPR) and nicotinamide; NAD(+) cleavage promoting non-apoptotic neuronal cell death. In males, involved in non-apoptotic death of the linker cell which guides gonad elongation during larval development. Required for both innate immune response and specification of AWC(OFF) neuron. During late embryogenesis, it acts downstream of CAMKII (unc-43) to regulate specification of asymmetric odorant receptors in AWC(OFF) neuron via the nsy-1/ASK1 pmk-1/p38 MAP kinase signaling cascade. Required to localize nsy-1 to postsynaptic regions of AWC neuron, suggesting that it may act by assembling a signaling complex that regulate odorant receptor expression. Also plays a central role in resistance to infection to a broad range of bacterial and fungi pathogens, possibly by activating pmk-1, independently of the NF-kappa-B pathway. Required for expression of antimicrobial peptides nlp-29 and nlp-31. Its role in immune response and neuron specification may be mediated by the same nsy-1/ASK1 pmk-1/p38 MAP kinase cascade signaling pathway. Involved in the response to anoxic conditions probably by activating the p38 pathway composed of nsy-1/sek-1/pmk-1. Involved in regulation of the serotonergic response of ADF neurons to pathogenic food. In addition, plays a role in the up-regulation of gcs-1 upon arsenite treatment, most likely through activation of pmk-1, to confer protection against toxicity induced by heavy metals. Its function is as follows. Regulates expression of antimicrobial peptide nlp-29 in response to fungal infection or physical injury. The chain is NAD(+) hydrolase tir-1 from Caenorhabditis elegans.